Consider the following 657-residue polypeptide: Macrolide export ATP-binding/permease protein MacB (657 aa).

The region spanning 5 to 242 (LELLDVHRTY…RAVTGESAFD (238 aa)) is the ABC transporter domain. ATP is bound at residue 41–48 (GASGSGKS). A run of 4 helical transmembrane segments spans residues 276-296 (FLSVLGIFVGVASVIAMMALG), 538-558 (IAAISLLVGGIGIMNIMLVSV), 596-616 (IGVFAGVGISLILAFFAGWAV), and 620-640 (LLSVVLATTFSALIGVFFGLW).

Belongs to the ABC transporter superfamily. Macrolide exporter (TC 3.A.1.122) family. In terms of assembly, homodimer.

It is found in the cell inner membrane. Functionally, non-canonical ABC transporter that contains transmembrane domains (TMD), which form a pore in the inner membrane, and an ATP-binding domain (NBD), which is responsible for energy generation. Confers resistance against macrolides. The protein is Macrolide export ATP-binding/permease protein MacB of Chlorobium phaeobacteroides (strain DSM 266 / SMG 266 / 2430).